The chain runs to 177 residues: Mediator of RNA polymerase II transcription subunit 6 (177 aa).

This sequence belongs to the Mediator complex subunit 6 family. In terms of assembly, component of the Mediator complex.

Its subcellular location is the nucleus. In terms of biological role, component of the Mediator complex, a coactivator involved in the regulated transcription of nearly all RNA polymerase II-dependent genes. Mediator functions as a bridge to convey information from gene-specific regulatory proteins to the basal RNA polymerase II transcription machinery. Mediator is recruited to promoters by direct interactions with regulatory proteins and serves as a scaffold for the assembly of a functional preinitiation complex with RNA polymerase II and the general transcription factors. This is Mediator of RNA polymerase II transcription subunit 6 (MED6) from Encephalitozoon cuniculi (strain GB-M1) (Microsporidian parasite).